The sequence spans 379 residues: All-trans-retinol dehydrogenase [NAD(+)] ADH4 (379 aa).

Position 1 is an N-acetylthreonine (T1). Zn(2+) contacts are provided by C46, H68, C98, C101, C104, C112, and C179. Residues 204–209, D228, K233, 297–299, and R374 each bind NAD(+); these read GLGGVG and VGV.

Belongs to the zinc-containing alcohol dehydrogenase family. Class-II subfamily. Homodimer. Zn(2+) is required as a cofactor.

The protein resides in the cytoplasm. The catalysed reaction is all-trans-retinol + NAD(+) = all-trans-retinal + NADH + H(+). It catalyses the reaction 9-cis-retinol + NAD(+) = 9-cis-retinal + NADH + H(+). It carries out the reaction 20-oxo-(5Z,8Z,11Z,14Z)-eicosatetraenoate + NAD(+) + H2O = (5Z,8Z,11Z,14Z)-eicosatetraenedioate + NADH + 2 H(+). The enzyme catalyses 20-hydroxy-(5Z,8Z,11Z,14Z)-eicosatetraenoate + NAD(+) = 20-oxo-(5Z,8Z,11Z,14Z)-eicosatetraenoate + NADH + H(+). The catalysed reaction is 1,4-benzoquinone + NADH + H(+) = hydroquinone + NAD(+). With respect to regulation, oxidation of 20-HETE is inhibited by low concentrations of N-heptylformamide. Oxidation of 20-HETE is a decreased by 55-65% by either all-trans-retinol or all-trans-retinoic acid. Strongly inhibited by omega-hydroxy fatty acids. Its function is as follows. Catalyzes the NAD-dependent oxidation of either all-trans-retinol or 9-cis-retinol. Also oxidizes long chain omega-hydroxy fatty acids, such as 20-HETE, producing both the intermediate aldehyde, 20-oxoarachidonate and the end product, a dicarboxylic acid, (5Z,8Z,11Z,14Z)-eicosatetraenedioate. Also catalyzes the reduction of benzoquinones. In Struthio camelus (Common ostrich), this protein is All-trans-retinol dehydrogenase [NAD(+)] ADH4.